A 7081-amino-acid chain; its full sequence is Leucine-rich repeat transmembrane protein CCDC168 (7081 aa).

Residues tryptophan 37–alanine 57 form a helical membrane-spanning segment. 2 LRR repeats span residues proline 233 to glutamine 256 and asparagine 420 to alanine 445. Residues glutamate 717–cysteine 745 form a disordered region. A compositionally biased stretch (polar residues) spans aspartate 718–threonine 742. Residues alanine 865 to glutamine 890 form an LRR 3 repeat. The tract at residues glutamine 943 to glutamate 1009 is disordered. Residues valine 958–glutamate 970 show a composition bias toward polar residues. Residues glutamine 981–glycine 999 show a composition bias toward basic and acidic residues. The LRR 4 repeat unit spans residues leucine 1050 to lysine 1075. Composition is skewed to polar residues over residues lysine 1274–serine 1286 and leucine 1295–proline 1304. Residues lysine 1274–proline 1304 form a disordered region. Residues asparagine 1501–threonine 1527 form an LRR 5 repeat. 2 stretches are compositionally biased toward basic and acidic residues: residues glutamate 1773 to leucine 1784 and threonine 1793 to aspartate 1804. 4 disordered regions span residues glutamate 1773–aspartate 1804, lysine 1954–serine 1973, serine 2008–serine 2031, and threonine 2083–arginine 2103. Positions alanine 1964 to serine 1973 are enriched in polar residues. The stretch at lysine 2373–glutamate 2397 is one LRR 6 repeat. The tract at residues glycine 2637–alanine 2680 is disordered. Residues alanine 2668–aspartate 2678 show a composition bias toward polar residues. LRR repeat units lie at residues serine 2727–alanine 2749, isoleucine 2832–serine 2855, isoleucine 2862–lysine 2889, leucine 3433–tryptophan 3458, and isoleucine 3630–serine 3653. A disordered region spans residues serine 3730–proline 3756. One copy of the LRR 12 repeat lies at methionine 3875–cysteine 3898. 8 disordered regions span residues glutamate 4119–lysine 4260, glutamine 4293–threonine 4428, glutamine 4729–glutamine 4756, serine 4794–threonine 4817, methionine 4831–asparagine 4859, glycine 4928–cysteine 4955, leucine 4966–glycine 4985, and glutamine 5191–histidine 5212. Basic and acidic residues-rich tracts occupy residues serine 4121–aspartate 4133, lysine 4147–leucine 4176, glutamate 4192–lysine 4245, glutamine 4329–glycine 4361, glutamate 4375–glycine 4401, and glutamate 4415–glutamine 4426. Residues serine 4731–threonine 4743 are compositionally biased toward polar residues. Composition is skewed to basic and acidic residues over residues leucine 4746–glutamine 4756 and lysine 4798–threonine 4817. A compositionally biased stretch (polar residues) spans lysine 5203–histidine 5212. The stretch at leucine 5311–arginine 5336 is one LRR 13 repeat. Residues leucine 5467–arginine 5496 are disordered. Residues aspartate 5469 to arginine 5496 are compositionally biased toward basic and acidic residues. The LRR 14 repeat unit spans residues leucine 5522–alanine 5545. Disordered regions lie at residues leucine 5564–proline 5583 and glutamine 5763–arginine 5792. Basic and acidic residues predominate over residues lysine 5779–arginine 5792. 5 LRR repeats span residues lysine 5901–proline 5924, proline 6259–serine 6282, histidine 6419–methionine 6442, histidine 6552–methionine 6575, and glutamine 6613–lysine 6637. Disordered stretches follow at residues cysteine 6859–tryptophan 6878 and alanine 6916–leucine 6950. Positions lysine 6860–serine 6871 are enriched in basic residues. Residues histidine 6937 to leucine 6950 show a composition bias toward basic and acidic residues. The stretch at asparagine 7012 to isoleucine 7036 is one LRR 20 repeat.

It localises to the membrane. The polypeptide is Leucine-rich repeat transmembrane protein CCDC168 (Homo sapiens (Human)).